Reading from the N-terminus, the 658-residue chain is MFRVTGIATARAVALQPFRAPLGVIRRFGISATASYEFQHGHDMQSRNGSRWDSRRQGDRRSSRWEGRGSDREDGERGSRGGMWRKPQGRRGRTDGAAREGFSLGPNTEVVRVADEAAGVESTPRTLVEEGVLSNELYEMLQSRGFDKLTPVQQKTLKPILQTEHDVVARAKTGTGKTLAFLMPLFQRLLEGPPSENVKAVVIAPTRDLAAQIFNEINEMRNANRKLRRFNAVVMMGGSSRTETFRSLERRRPNIVVATPGRLIDMLEACGPKYFTEVDFKVLDEADTLLEIGFKQALEQINDILNQLNQKGTTHIRTLLVSATLDDKVQSLANSIMNHAKCLFIDTVDPNEQATNENIAQKVVISKDFADNITASLYKIREEASANPKLKAIVFMPTIVAVEYWGELLQSQCRGTPVLLFHGGLSQGRRNSTMKRFRAMDSGILVCTDVAARGMDVSDVQHVYQVGVPTSPDNYIHRIGRTGRAGRKGSSTIFLAEHELCILDILRRKNNVVISDQETFDAAAQELSDVREAFSLDRDRLHDFLLKNLSFYRGSQGEYDFPLEAYISIARAYGTLLGDSNQRLTLSGRMLTTFVPNHPAVCSLFNIIGPVNSKSSYGFRDTNKRHRRGRLDDSGRLEYSKKRHSYARSYSPSISDGF.

The transit peptide at 1 to 35 (MFRVTGIATARAVALQPFRAPLGVIRRFGISATAS) directs the protein to the mitochondrion. Residues 40–79 (HGHDMQSRNGSRWDSRRQGDRRSSRWEGRGSDREDGERGS) show a composition bias toward basic and acidic residues. Positions 40–104 (HGHDMQSRNG…DGAAREGFSL (65 aa)) are disordered. The Q motif motif lies at 126 to 154 (TLVEEGVLSNELYEMLQSRGFDKLTPVQQ). The 186-residue stretch at 158–343 (KPILQTEHDV…NSIMNHAKCL (186 aa)) folds into the Helicase ATP-binding domain. 171-178 (AKTGTGKT) is a binding site for ATP. The short motif at 284–287 (DEAD) is the DEAD box element. The Helicase C-terminal domain occupies 372-528 (NITASLYKIR…TFDAAAQELS (157 aa)).

Belongs to the DEAD box helicase family. DDX18/HAS1 subfamily.

The protein resides in the mitochondrion matrix. It carries out the reaction ATP + H2O = ADP + phosphate + H(+). In terms of biological role, ATP-dependent RNA helicase required for mitochondrial splicing of group I and II introns. Also required for efficient mitochondrial translation. This Eremothecium gossypii (strain ATCC 10895 / CBS 109.51 / FGSC 9923 / NRRL Y-1056) (Yeast) protein is ATP-dependent RNA helicase MSS116, mitochondrial (MSS116).